A 365-amino-acid polypeptide reads, in one-letter code: Neuronal migration protein doublecortin (365 aa).

The segment at 11–31 (RDKTSRNMRGSRMNGLPSPTH) is disordered. Threonine 14 carries the post-translational modification Phosphothreonine; by PKC. A Phosphoserine; by CDK5 modification is found at serine 28. A Phosphoserine; by MARK1 and PKA modification is found at serine 47. Doublecortin domains follow at residues 53-139 (KKVR…VEYT) and 180-263 (KLVT…AQDD). Tyrosine 70 is subject to Phosphotyrosine; by ABL. Serine 74 carries the phosphoserine; by PKC modification. Serine 90 bears the Phosphoserine; by CK2 mark. Serine 110 is subject to Phosphoserine; by PKC. Serine 115 bears the Phosphoserine; by CK2, MARK1 and PKA mark. Position 265 is a phosphoserine; by CK2 (serine 265). The disordered stretch occupies residues 275 to 365 (KGNPSATAGP…DDSDSLGDSM (91 aa)). Position 287 is a phosphoserine; by CDK5 (serine 287). Threonine 289 is modified (phosphothreonine; by CDK5). A Phosphoserine; by PKC modification is found at serine 294. Serine 297 bears the Phosphoserine; by CDK5 mark. Serine 306 is subject to Phosphoserine; by CK2. The residue at position 306 (serine 306) is a Phosphoserine; by DYRK2. Polar residues predominate over residues 307-341 (PADSGNDQDANGTSSSQLSTPKSKQSPISTPTSPG). At threonine 326 the chain carries Phosphothreonine; by CDK5. The residue at position 326 (threonine 326) is a Phosphothreonine; by PKC and MAPK. Phosphoserine; by CDK5 is present on serine 332. The residue at position 332 (serine 332) is a Phosphoserine; by MAPK. Phosphothreonine; by MAPK is present on threonine 336. Serine 339 is modified (phosphoserine; by CDK5). Phosphoserine; by MAPK is present on serine 339. At serine 342 the chain carries Phosphoserine; by PKC. Serine 354 and serine 360 each carry phosphoserine; by CK2. Positions 356 to 365 (DDSDSLGDSM) are enriched in acidic residues.

Interacts with tubulin. Interacts with USP9X. Phosphorylation by MARK1, MARK2 and PKA regulates its ability to bind microtubules. Phosphorylation at Ser-265 and Ser-297 seems to occur only in neonatal brain, the levels falling precipitously by postnatal day 21. Post-translationally, ubiquitinated by MDM2, leading to its degradation by the proteasome. Ubiquitinated by MDM2 and subsequent degradation leads to reduce the dendritic spine density of olfactory bulb granule cells. In terms of tissue distribution, highly expressed in neuronal cells of fetal brain (in the majority of cells of the cortical plate, intermediate zone and ventricular zone), but not expressed in other fetal tissues. In the adult, highly expressed in the brain frontal lobe, but very low expression in other regions of brain, and not detected in heart, placenta, lung, liver, skeletal muscles, kidney and pancreas.

It is found in the cytoplasm. The protein localises to the cell projection. The protein resides in the neuron projection. In terms of biological role, microtubule-associated protein required for initial steps of neuronal dispersion and cortex lamination during cerebral cortex development. May act by competing with the putative neuronal protein kinase DCLK1 in binding to a target protein. May in that way participate in a signaling pathway that is crucial for neuronal interaction before and during migration, possibly as part of a calcium ion-dependent signal transduction pathway. May be part with PAFAH1B1/LIS-1 of overlapping, but distinct, signaling pathways that promote neuronal migration. In Homo sapiens (Human), this protein is Neuronal migration protein doublecortin (DCX).